A 269-amino-acid polypeptide reads, in one-letter code: Tryptophan synthase alpha chain (269 aa).

Catalysis depends on proton acceptor residues Glu-49 and Asp-60.

Belongs to the TrpA family. As to quaternary structure, tetramer of two alpha and two beta chains.

The catalysed reaction is (1S,2R)-1-C-(indol-3-yl)glycerol 3-phosphate + L-serine = D-glyceraldehyde 3-phosphate + L-tryptophan + H2O. The protein operates within amino-acid biosynthesis; L-tryptophan biosynthesis; L-tryptophan from chorismate: step 5/5. Functionally, the alpha subunit is responsible for the aldol cleavage of indoleglycerol phosphate to indole and glyceraldehyde 3-phosphate. The chain is Tryptophan synthase alpha chain from Pseudomonas putida (strain ATCC 700007 / DSM 6899 / JCM 31910 / BCRC 17059 / LMG 24140 / F1).